Here is a 238-residue protein sequence, read N- to C-terminus: MWNYLSLLPVILFLWAIAGIWIVFAIAVVNGSVDLNEGFPFISICGSYAPQSCIFGQVLNIGAALTVWICIVRHHQLRDWGVKTWQNQLILWSGILCALGTSIVGNFQDKNQKPTHLAGAFLAFILGNLYFWLQFFLSWWVKGLPQPGPHWIKSLRLSLCSLSTILIVAMIVLHALHMRSASAICEWVVAMLLFMLFGFFAVDFSILRGCTLHLHPRLDSSLPQAPSGSPNIQMAQVL.

Over 1–8 (MWNYLSLL) the chain is Cytoplasmic. The chain crosses the membrane as a helical span at residues 9 to 29 (PVILFLWAIAGIWIVFAIAVV). The N-linked (GlcNAc...) asparagine glycan is linked to Asn30. The Extracellular portion of the chain corresponds to 30–51 (NGSVDLNEGFPFISICGSYAPQ). The chain crosses the membrane as a helical span at residues 52 to 72 (SCIFGQVLNIGAALTVWICIV). Topologically, residues 73–86 (RHHQLRDWGVKTWQ) are cytoplasmic. Residues 87–107 (NQLILWSGILCALGTSIVGNF) form a helical membrane-spanning segment. Residues 108-116 (QDKNQKPTH) are Extracellular-facing. Residues 117-137 (LAGAFLAFILGNLYFWLQFFL) traverse the membrane as a helical segment. Residues 138–156 (SWWVKGLPQPGPHWIKSLR) are Cytoplasmic-facing. The chain crosses the membrane as a helical span at residues 157-177 (LSLCSLSTILIVAMIVLHALH). Over 178-186 (MRSASAICE) the chain is Extracellular. The chain crosses the membrane as a helical span at residues 187-207 (WVVAMLLFMLFGFFAVDFSIL). The Cytoplasmic portion of the chain corresponds to 208–238 (RGCTLHLHPRLDSSLPQAPSGSPNIQMAQVL).

Belongs to the DRAM/TMEM150 family.

It is found in the cell membrane. Its subcellular location is the endosome membrane. The protein localises to the cytoplasmic vesicle. The protein resides in the autophagosome membrane. In terms of biological role, modulator of macroautophagy that causes accumulation of autophagosomes under basal conditions and enhances autophagic flux. Represses cell death and promotes long-term clonogenic survival of cells grown in the absence of glucose in a macroautophagy-independent manner. May have some role in extracellular matrix engulfment or growth factor receptor recycling, both of which can modulate cell survival. The chain is Modulator of macroautophagy TMEM150B from Mus musculus (Mouse).